The following is a 285-amino-acid chain: uncharacterized protein (285 aa).

This is an uncharacterized protein from Mycoplasma pneumoniae (strain ATCC 29342 / M129 / Subtype 1) (Mycoplasmoides pneumoniae).